The sequence spans 409 residues: NADH-ubiquinone oxidoreductase chain 4 (409 aa).

Transmembrane regions (helical) follow at residues 9–29 (LYFF…GFVA), 44–64 (SFSF…VLLS), 68–88 (FMLL…FVPS), 90–110 (VILM…MILG), 125–145 (IFYA…SFFF), 160–180 (VFVL…HLWL), 194–214 (LLAG…LGCL), 221–241 (VWIV…MFQS), 246–268 (LAAY…IIMS), 273–295 (GVIL…GEFY), 305–325 (YMSS…VVFL), 352–372 (FSFW…IYLL), and 389–409 (VGFS…SVFF).

The protein belongs to the complex I subunit 4 family.

It is found in the mitochondrion membrane. The catalysed reaction is a ubiquinone + NADH + 5 H(+)(in) = a ubiquinol + NAD(+) + 4 H(+)(out). In terms of biological role, core subunit of the mitochondrial membrane respiratory chain NADH dehydrogenase (Complex I) that is believed to belong to the minimal assembly required for catalysis. Complex I functions in the transfer of electrons from NADH to the respiratory chain. The immediate electron acceptor for the enzyme is believed to be ubiquinone. This Ascaris suum (Pig roundworm) protein is NADH-ubiquinone oxidoreductase chain 4 (ND4).